The chain runs to 75 residues: Defensin-like protein 59 (75 aa).

A signal peptide spans 1–19; it reads MNITKSYVVIFFLVMLTNS. Disulfide bonds link cysteine 39/cysteine 73, cysteine 43/cysteine 66, cysteine 52/cysteine 71, and cysteine 56/cysteine 72.

Belongs to the DEFL family.

The protein resides in the secreted. The protein is Defensin-like protein 59 of Arabidopsis thaliana (Mouse-ear cress).